Reading from the N-terminus, the 417-residue chain is Adrenocortical dysplasia protein homolog (417 aa).

The PWI signature appears at 11–13 (PWI). At S25 the chain carries Phosphoserine. The interaction with POT1 stretch occupies residues 156-245 (ESASSSAGLT…SSIDSSQKAQ (90 aa)). 2 stretches are compositionally biased toward polar residues: residues 237-250 (SIDSSQKAQENPAS) and 259-292 (SGASVSLLSALPTSDPGQKDNSQPPPTVCSTSPR). The segment at 237 to 309 (SIDSSQKAQE…PCSSTPSSPL (73 aa)) is disordered. Residues 296-309 (PSSTPCSSTPSSPL) show a composition bias toward low complexity. Residues S313 and S317 each carry the phosphoserine modification. K348 participates in a covalent cross-link: Glycyl lysine isopeptide (Lys-Gly) (interchain with G-Cter in SUMO2).

As to quaternary structure, component of the shelterin complex (telosome) composed of TERF1, TERF2, TINF2, TERF2IP ACD and POT1. Forms heterodimers with POT1. Identified in a complex with POT1 and single-stranded telomeric DNA. Interacts with STN1 and TINF2.

The protein resides in the nucleus. It is found in the chromosome. It localises to the telomere. In terms of biological role, component of the shelterin complex (telosome) that is involved in the regulation of telomere length and protection. Shelterin associates with arrays of double-stranded TTAGGG repeats added by telomerase and protects chromosome ends. Without its protective activity, telomeres are no longer hidden from the DNA damage surveillance and chromosome ends are inappropriately processed by DNA repair pathways. Promotes binding of POT1 to single-stranded telomeric DNA. Modulates the inhibitory effects of POT1 on telomere elongation. The ACD-POT1 heterodimer enhances telomere elongation by recruiting telomerase to telomeres and increasing its processivity. May play a role in organogenesis. The polypeptide is Adrenocortical dysplasia protein homolog (Rattus norvegicus (Rat)).